The sequence spans 192 residues: NADH-ubiquinone oxidoreductase subunit 9 (192 aa).

It belongs to the complex I 30 kDa subunit family. Complex I is composed of about 30 different subunits.

The protein localises to the mitochondrion inner membrane. The enzyme catalyses a ubiquinone + NADH + 5 H(+)(in) = a ubiquinol + NAD(+) + 4 H(+)(out). Functionally, core subunit of the mitochondrial membrane respiratory chain NADH dehydrogenase (Complex I) that is believed to belong to the minimal assembly required for catalysis. Complex I functions in the transfer of electrons from NADH to the respiratory chain. The immediate electron acceptor for the enzyme is believed to be ubiquinone. This Prototheca wickerhamii protein is NADH-ubiquinone oxidoreductase subunit 9 (NAD9).